A 79-amino-acid chain; its full sequence is Putative antitoxin VapB12 (79 aa).

This sequence belongs to the UPF0330 family.

In terms of biological role, possibly the antitoxin component of a type II toxin-antitoxin (TA) system. Its cognate toxin is VapC12 (Potential). This Sulfurisphaera tokodaii (strain DSM 16993 / JCM 10545 / NBRC 100140 / 7) (Sulfolobus tokodaii) protein is Putative antitoxin VapB12 (vapB12).